Here is a 350-residue protein sequence, read N- to C-terminus: Glycerol-1-phosphate dehydrogenase [NAD(P)+] (350 aa).

NAD(+) is bound by residues 97–101 and 119–122; these read GSKID and TTPS. D124 lines the substrate pocket. S128 lines the NAD(+) pocket. D171 contributes to the substrate binding site. Positions 171 and 251 each coordinate Zn(2+). H255 provides a ligand contact to substrate. H267 serves as a coordination point for Zn(2+).

This sequence belongs to the glycerol-1-phosphate dehydrogenase family. The cofactor is Zn(2+).

It localises to the cytoplasm. The catalysed reaction is sn-glycerol 1-phosphate + NAD(+) = dihydroxyacetone phosphate + NADH + H(+). It carries out the reaction sn-glycerol 1-phosphate + NADP(+) = dihydroxyacetone phosphate + NADPH + H(+). It participates in membrane lipid metabolism; glycerophospholipid metabolism. In terms of biological role, catalyzes the NAD(P)H-dependent reduction of dihydroxyacetonephosphate (DHAP or glycerone phosphate) to glycerol 1-phosphate (G1P). The G1P thus generated is used as the glycerophosphate backbone of phospholipids in the cellular membranes of Archaea. The chain is Glycerol-1-phosphate dehydrogenase [NAD(P)+] from Picrophilus torridus (strain ATCC 700027 / DSM 9790 / JCM 10055 / NBRC 100828 / KAW 2/3).